The following is a 552-amino-acid chain: Leucine-rich repeat-containing protein 31 (552 aa).

The interval 1–65 (MSQTRKKTSS…SETAKPLSSE (65 aa)) is disordered. Residues 31–41 (ESRKEDNDLKT) show a composition bias toward basic and acidic residues. Residues 42 to 58 (SDSQPSDWIQKTATSET) are compositionally biased toward polar residues. 9 LRR repeats span residues 227–246 (SLEVLDLSINRDIVGSLNSI), 255–275 (NLKVLKLHSCGLSQKSVKILD), 283–293 (ELRKLDLSCNK), 311–331 (HLQVLDLHQCSLTADDVMSLT), 339–360 (NLQELDLSANKKMGSSSENLLS), 367–387 (ALKSLVINNCALESETFTALA), 395–415 (ALEVFNLSWNKCVGGNLKLLL), 423–443 (SLQVLRLSSCSLVTEDVALLA), and 453–475 (KLQKLDLSYNDSICDAGWTMFCQ).

This Homo sapiens (Human) protein is Leucine-rich repeat-containing protein 31 (LRRC31).